A 470-amino-acid chain; its full sequence is Nuclear receptor subfamily 0 group B member 1 (470 aa).

A run of 3 repeats spans residues 1–67, 68–133, and 134–200. The 4 X 67 AA tandem repeats stretch occupies residues 1–253; the sequence is MAGENHQWQG…RPVALKSPQV (253 aa). 3 short sequence motifs (LXXLL motif) span residues 13–17, 80–84, and 146–150; these read LYNML, LYSML, and LYSLL. Residues 201-253 form a 4; truncated repeat; the sequence is FCGEDHPQQGSTLYCMPTSTNQAQAAPEERPRAPWWDTSSGALRPVALKSPQV. Residues 205–469 form the NR LBD domain; it reads DHPQQGSTLY…DMMLEMLCTK (265 aa). An AF-2 motif motif is present at residues 461-466; that stretch reads MMLEML.

Belongs to the nuclear hormone receptor family. NR0 subfamily. As to quaternary structure, homodimer. Interacts with NR5A1, NR5A2, NR0B2 and with COPS2. Interacts with ESRRB; represses ESRRB activity at the GATA6 promoter.

It localises to the nucleus. Its subcellular location is the cytoplasm. Its function is as follows. Nuclear receptor that lacks a DNA-binding domain and acts as a corepressor that inhibits the transcriptional activity of other nuclear receptors through heterodimeric interactions. Component of a cascade required for the development of the hypothalamic-pituitary-adrenal-gonadal axis. May also have a role in the development of the embryo and in the maintenance of embryonic stem cell pluripotency. The protein is Nuclear receptor subfamily 0 group B member 1 (NR0B1) of Pan troglodytes (Chimpanzee).